Here is a 488-residue protein sequence, read N- to C-terminus: MTFNNKTIEELHNLLVSKEISATELTQATLENIKSREEALNSFVTIAEEQALVQAKAIDEAGIDANNVLSGIPLAVKDNISTDGILTTAASKMLYNYEPIFDATAVANAKTKGMIVVGKTNMDEFAMGGSGETSHYGATKNAWDHSKVPGGSSSGSAAAVASGQVRLSLGSDTGGSIRQPAAFNGIVGLKPTYGTVSRFGLIAFGSSLDQIGPFAPTVKENALLLNAIASEDTKDSTSAPVRIADFTSKIGQDIKGMKIALPKEYLGEGIDPEVKETILNAAKHFEKLGAIVEEVSLPHSKYGVAVYYIIASSEASSNLQRFDGIRYGYRAEDATNLDEIYVNSRSQGFGEEVKRRIMLGTFSLSSGYYDAYYKKAGQVRTLIIQDFEKVFADYDLILGPTAPSVAYDLDSLNHDPVAMYLADLLTIPVNLAGLPGISIPAGFSQGLPVGLQLIGPKYSEETIYQAAAAFEATTDYHKQQPVIFGGDN.

Active-site charge relay system residues include K77 and S152. S176 acts as the Acyl-ester intermediate in catalysis.

It belongs to the amidase family. GatA subfamily. As to quaternary structure, heterotrimer of A, B and C subunits.

It catalyses the reaction L-glutamyl-tRNA(Gln) + L-glutamine + ATP + H2O = L-glutaminyl-tRNA(Gln) + L-glutamate + ADP + phosphate + H(+). Its function is as follows. Allows the formation of correctly charged Gln-tRNA(Gln) through the transamidation of misacylated Glu-tRNA(Gln) in organisms which lack glutaminyl-tRNA synthetase. The reaction takes place in the presence of glutamine and ATP through an activated gamma-phospho-Glu-tRNA(Gln). This chain is Glutamyl-tRNA(Gln) amidotransferase subunit A, found in Streptococcus pneumoniae (strain 70585).